The primary structure comprises 221 residues: MQEIPEKPLSQPAGTEIIEKYFPHLSERQREQFEQMGGLYTHWNALINVISRKDIDNLYLHHVLHSLGIARMLNFKPGTSVLDLGTGGGFPGIPLAILFPQVSFLLVDSIGKKVKVASAVAEALGLDNVRTMHCRAESIGEKFDFIVSRAVMKLSELAKICRKLIRREDQQNALPNGLICLKGGELQHEILPFRNKAMTEELWPTFEEEYFKTKKVVYLPL.

S-adenosyl-L-methionine-binding positions include Gly-85, Phe-90, 136–137 (AE), and Arg-149.

The protein belongs to the methyltransferase superfamily. RNA methyltransferase RsmG family.

It localises to the cytoplasm. Specifically methylates the N7 position of a guanine in 16S rRNA. The chain is Ribosomal RNA small subunit methyltransferase G from Porphyromonas gingivalis (strain ATCC BAA-308 / W83).